The primary structure comprises 353 residues: tRNA-splicing endonuclease (353 aa).

Catalysis depends on residues Y289, H300, and K331.

This sequence belongs to the tRNA-intron endonuclease family. Archaeal long subfamily. Homodimer.

The catalysed reaction is pretRNA = a 3'-half-tRNA molecule with a 5'-OH end + a 5'-half-tRNA molecule with a 2',3'-cyclic phosphate end + an intron with a 2',3'-cyclic phosphate and a 5'-hydroxyl terminus.. Endonuclease that removes tRNA introns. Cleaves pre-tRNA at the 5'- and 3'-splice sites to release the intron. The products are an intron and two tRNA half-molecules bearing 2',3' cyclic phosphate and 5'-OH termini. Recognizes a pseudosymmetric substrate in which 2 bulged loops of 3 bases are separated by a stem of 4 bp. This is tRNA-splicing endonuclease from Methanosarcina mazei (strain ATCC BAA-159 / DSM 3647 / Goe1 / Go1 / JCM 11833 / OCM 88) (Methanosarcina frisia).